Consider the following 525-residue polypeptide: Glutamate--cysteine ligase (525 aa).

This sequence belongs to the glutamate--cysteine ligase type 1 family. Type 1 subfamily.

It carries out the reaction L-cysteine + L-glutamate + ATP = gamma-L-glutamyl-L-cysteine + ADP + phosphate + H(+). The protein operates within sulfur metabolism; glutathione biosynthesis; glutathione from L-cysteine and L-glutamate: step 1/2. The polypeptide is Glutamate--cysteine ligase (Alcanivorax borkumensis (strain ATCC 700651 / DSM 11573 / NCIMB 13689 / SK2)).